A 178-amino-acid chain; its full sequence is Translation initiation factor IF-3 (178 aa).

The interval 1–20 (MRRPFKTDAPVKDGPRSNRE) is disordered.

This sequence belongs to the IF-3 family. In terms of assembly, monomer.

Its subcellular location is the cytoplasm. Its function is as follows. IF-3 binds to the 30S ribosomal subunit and shifts the equilibrium between 70S ribosomes and their 50S and 30S subunits in favor of the free subunits, thus enhancing the availability of 30S subunits on which protein synthesis initiation begins. The polypeptide is Translation initiation factor IF-3 (Rhizobium leguminosarum bv. trifolii (strain WSM2304)).